Reading from the N-terminus, the 417-residue chain is uncharacterized protein (417 aa).

2 disordered regions span residues 44-83 (FTNE…VRSR) and 325-346 (VQSA…PPKE). Positions 54 to 64 (SNYSTSGYDSS) are enriched in low complexity. Positions 65-76 (AETISANSSPIN) are enriched in polar residues. A compositionally biased stretch (basic residues) spans 326–339 (QSARKNQKKGRKNR). Residues 362–382 (FLIIGVYVLVFIYVCTNVLTV) traverse the membrane as a helical segment.

The protein resides in the membrane. This is an uncharacterized protein from Caenorhabditis elegans.